The primary structure comprises 292 residues: GTP cyclohydrolase FolE2 (292 aa).

Belongs to the GTP cyclohydrolase IV family.

It catalyses the reaction GTP + H2O = 7,8-dihydroneopterin 3'-triphosphate + formate + H(+). The protein operates within cofactor biosynthesis; 7,8-dihydroneopterin triphosphate biosynthesis; 7,8-dihydroneopterin triphosphate from GTP: step 1/1. Converts GTP to 7,8-dihydroneopterin triphosphate. This Staphylococcus epidermidis (strain ATCC 12228 / FDA PCI 1200) protein is GTP cyclohydrolase FolE2.